Reading from the N-terminus, the 682-residue chain is DNA-directed RNA polymerase subunit beta' (682 aa).

Zn(2+) contacts are provided by cysteine 69, cysteine 71, cysteine 87, and cysteine 90. Mg(2+)-binding residues include aspartate 489, aspartate 491, and aspartate 493.

Belongs to the RNA polymerase beta' chain family. RpoC1 subfamily. As to quaternary structure, in plastids the minimal PEP RNA polymerase catalytic core is composed of four subunits: alpha, beta, beta', and beta''. When a (nuclear-encoded) sigma factor is associated with the core the holoenzyme is formed, which can initiate transcription. Mg(2+) serves as cofactor. Requires Zn(2+) as cofactor.

The protein resides in the plastid. It is found in the chloroplast. The catalysed reaction is RNA(n) + a ribonucleoside 5'-triphosphate = RNA(n+1) + diphosphate. Functionally, DNA-dependent RNA polymerase catalyzes the transcription of DNA into RNA using the four ribonucleoside triphosphates as substrates. In Acorus gramineus (Dwarf sweet flag), this protein is DNA-directed RNA polymerase subunit beta'.